Consider the following 211-residue polypeptide: MRDDRIFIKGNKLGINAIINMDKFGNFDEMLDSLVEKLSRGKKFYKGATLTVTTDLKYINERQISKLKDVLFDEILIKDCIFEERLEKQSSVFSGVYEGRTKFVRKTVRSGQCLNYAGNLIIIGDVNNGGEVRAHGNVIVLGDLKGKVFAGDNGNENAIIAAYSLEPELISISGKITISPDDFEKTGYPEVARLNENNIIVEPYLPDKYSY.

Belongs to the MinC family. Interacts with MinD and FtsZ.

Its function is as follows. Cell division inhibitor that blocks the formation of polar Z ring septums. Rapidly oscillates between the poles of the cell to destabilize FtsZ filaments that have formed before they mature into polar Z rings. Prevents FtsZ polymerization. In Clostridium perfringens (strain 13 / Type A), this protein is Probable septum site-determining protein MinC.